The sequence spans 150 residues: Ribonuclease H (150 aa).

The RNase H type-1 domain occupies 3 to 144 (DKDMIEIWTD…ADGLARKGTD (142 aa)). Mg(2+)-binding residues include Asp-12, Glu-50, Asp-72, and Asp-136. Positions 129 to 150 (DEGNERADGLARKGTDEVRGRK) are disordered.

It belongs to the RNase H family. In terms of assembly, monomer. Mg(2+) serves as cofactor.

It localises to the cytoplasm. The enzyme catalyses Endonucleolytic cleavage to 5'-phosphomonoester.. Endonuclease that specifically degrades the RNA of RNA-DNA hybrids. The chain is Ribonuclease H from Hyphomonas neptunium (strain ATCC 15444).